The chain runs to 446 residues: Chromosomal replication initiator protein DnaA (446 aa).

Residues 1 to 92 (MENISDLWNS…SQAEEEIDLP (92 aa)) are domain I, interacts with DnaA modulators. Residues 87–107 (EEIDLPPSKPNSAQDDSNHLP) are disordered. The domain II stretch occupies residues 93-109 (PSKPNSAQDDSNHLPQS). Residues 96 to 107 (PNSAQDDSNHLP) show a composition bias toward polar residues. Residues 110–326 (MLNPKYTFDT…GALIRVVAYS (217 aa)) form a domain III, AAA+ region region. Residues Gly154, Gly156, Lys157, and Thr158 each coordinate ATP. Positions 327–446 (SLINKDINAD…QVEEINDILK (120 aa)) are domain IV, binds dsDNA.

This sequence belongs to the DnaA family. As to quaternary structure, oligomerizes as a right-handed, spiral filament on DNA at oriC.

It is found in the cytoplasm. Plays an essential role in the initiation and regulation of chromosomal replication. ATP-DnaA binds to the origin of replication (oriC) to initiate formation of the DNA replication initiation complex once per cell cycle. Binds the DnaA box (a 9 base pair repeat at the origin) and separates the double-stranded (ds)DNA. Forms a right-handed helical filament on oriC DNA; dsDNA binds to the exterior of the filament while single-stranded (ss)DNA is stabiized in the filament's interior. The ATP-DnaA-oriC complex binds and stabilizes one strand of the AT-rich DNA unwinding element (DUE), permitting loading of DNA polymerase. After initiation quickly degrades to an ADP-DnaA complex that is not apt for DNA replication. Binds acidic phospholipids. The sequence is that of Chromosomal replication initiator protein DnaA from Bacillus cereus (strain ATCC 10987 / NRS 248).